The chain runs to 558 residues: Dihydroxy-acid dehydratase (558 aa).

Cys49 contributes to the [2Fe-2S] cluster binding site. Residue Asp81 coordinates Mg(2+). Cys122 contributes to the [2Fe-2S] cluster binding site. Residues Asp123 and Lys124 each coordinate Mg(2+). At Lys124 the chain carries N6-carboxylysine. Cys194 lines the [2Fe-2S] cluster pocket. Position 446 (Glu446) interacts with Mg(2+). Ser472 serves as the catalytic Proton acceptor.

It belongs to the IlvD/Edd family. As to quaternary structure, homodimer. The cofactor is [2Fe-2S] cluster. Requires Mg(2+) as cofactor.

It carries out the reaction (2R)-2,3-dihydroxy-3-methylbutanoate = 3-methyl-2-oxobutanoate + H2O. It catalyses the reaction (2R,3R)-2,3-dihydroxy-3-methylpentanoate = (S)-3-methyl-2-oxopentanoate + H2O. It functions in the pathway amino-acid biosynthesis; L-isoleucine biosynthesis; L-isoleucine from 2-oxobutanoate: step 3/4. Its pathway is amino-acid biosynthesis; L-valine biosynthesis; L-valine from pyruvate: step 3/4. Its function is as follows. Functions in the biosynthesis of branched-chain amino acids. Catalyzes the dehydration of (2R,3R)-2,3-dihydroxy-3-methylpentanoate (2,3-dihydroxy-3-methylvalerate) into 2-oxo-3-methylpentanoate (2-oxo-3-methylvalerate) and of (2R)-2,3-dihydroxy-3-methylbutanoate (2,3-dihydroxyisovalerate) into 2-oxo-3-methylbutanoate (2-oxoisovalerate), the penultimate precursor to L-isoleucine and L-valine, respectively. The protein is Dihydroxy-acid dehydratase of Synechococcus sp. (strain RCC307).